A 378-amino-acid polypeptide reads, in one-letter code: Cobalt-precorrin-5B C(1)-methyltransferase (378 aa).

This sequence belongs to the CbiD family.

The enzyme catalyses Co-precorrin-5B + S-adenosyl-L-methionine = Co-precorrin-6A + S-adenosyl-L-homocysteine. Its pathway is cofactor biosynthesis; adenosylcobalamin biosynthesis; cob(II)yrinate a,c-diamide from sirohydrochlorin (anaerobic route): step 6/10. Functionally, catalyzes the methylation of C-1 in cobalt-precorrin-5B to form cobalt-precorrin-6A. In Thermoplasma volcanium (strain ATCC 51530 / DSM 4299 / JCM 9571 / NBRC 15438 / GSS1), this protein is Cobalt-precorrin-5B C(1)-methyltransferase.